The following is a 602-amino-acid chain: DNA mismatch repair protein MutL (602 aa).

It belongs to the DNA mismatch repair MutL/HexB family.

Its function is as follows. This protein is involved in the repair of mismatches in DNA. It is required for dam-dependent methyl-directed DNA mismatch repair. May act as a 'molecular matchmaker', a protein that promotes the formation of a stable complex between two or more DNA-binding proteins in an ATP-dependent manner without itself being part of a final effector complex. This Baumannia cicadellinicola subsp. Homalodisca coagulata protein is DNA mismatch repair protein MutL.